The primary structure comprises 364 residues: Protein LATERAL BRANCHING OXIDOREDUCTASE 1 (364 aa).

Residues 203–312 (RFEEMFGEAV…RLTIVTFYAP (110 aa)) form the Fe2OG dioxygenase domain. Fe cation is bound by residues His-235, Asp-237, and His-293. Residue Arg-303 participates in 2-oxoglutarate binding.

The protein belongs to the iron/ascorbate-dependent oxidoreductase family. In terms of assembly, monomer. Fe(2+) serves as cofactor. Requires L-ascorbate as cofactor. As to expression, expressed in the vasculature throughout the plant and in the buds and root tips.

It is found in the cytoplasm. It carries out the reaction (11R)-methyl carlactonoate + 2-oxoglutarate + O2 = (11R)-hydroxymethyl carlactonoate + succinate + CO2. Oxoglutarate-dependent dioxygenase involved in the biosynthesis of strigolactone natural products, bioactive compounds promoting plant fitness and soil microbe interactions, but preventing shoot branching. Catalyzes the hydroxylation of (11R)-methyl carlactonoate (MeCLA) to produce (11R)-hydroxymethyl carlactonoate (1'-HO-MeCLA) in final stages of strigolactone biosynthesis, downstream of MAX1 and CLAMT. The chain is Protein LATERAL BRANCHING OXIDOREDUCTASE 1 from Arabidopsis thaliana (Mouse-ear cress).